The following is a 395-amino-acid chain: Tryptophan synthase beta chain (395 aa).

K86 is subject to N6-(pyridoxal phosphate)lysine.

This sequence belongs to the TrpB family. As to quaternary structure, tetramer of two alpha and two beta chains. It depends on pyridoxal 5'-phosphate as a cofactor.

The catalysed reaction is (1S,2R)-1-C-(indol-3-yl)glycerol 3-phosphate + L-serine = D-glyceraldehyde 3-phosphate + L-tryptophan + H2O. Its pathway is amino-acid biosynthesis; L-tryptophan biosynthesis; L-tryptophan from chorismate: step 5/5. Functionally, the beta subunit is responsible for the synthesis of L-tryptophan from indole and L-serine. The chain is Tryptophan synthase beta chain from Psychromonas ingrahamii (strain DSM 17664 / CCUG 51855 / 37).